A 685-amino-acid chain; its full sequence is Protein OCTOPUS (685 aa).

Disordered stretches follow at residues 1–34 (MNPATDPVSAAAAALAPPPQPPQPHRLSTSCNRH), 152–202 (RNLP…DYVE), and 280–314 (KWRQNQKMKKRRNGGDHRPGSARLPVEKPIGRQLR). Residues 179 to 202 (VNDEGEAESDDEELEEEEEEDYVE) show a composition bias toward acidic residues. Residues 280–291 (KWRQNQKMKKRR) show a composition bias toward basic residues. The span at 292-314 (NGGDHRPGSARLPVEKPIGRQLR) shows a compositional bias: basic and acidic residues. At Ser-318 the chain carries Phosphoserine. The disordered stretch occupies residues 419-471 (VEEPAPPPPVVNQTNGVSDPVIIPGGSIQTRDYYTDSSSRRRKSLDRSSSSMR). Residues 549 to 578 (LIYRKSVNKYEEEEEEEEDRYRRLNGGMVE) adopt a coiled-coil conformation. Residues 584 to 640 (SWPELRNGGGGGGGPRMVRSNSNVSWRSSGGGSARKVNGLDRRNKSSRYSPKNGENG) are disordered. Residues 601-611 (VRSNSNVSWRS) are compositionally biased toward low complexity.

This sequence belongs to the OCTOPUS family. Interacts with VCC. Post-translationally, phosphorylation at Ser-318 amplifies the promotion of protophloem differentiation. In terms of tissue distribution, expressed in provascular cells and phloem initials (e.g. protophloem, metaphloem, sieve element precursor cells and sieve element procambium precursor cells).

Its subcellular location is the cell membrane. The protein resides in the cytoplasm. Potentiates primary root protophloem differentiation. Required, together with VCC, for embryo provasculature development and cotyledon vascular complexity and connectivity. Regulates roots architecture. Mediates the recruitment of ASK7/BIN2 to the plasma membrane. The protein is Protein OCTOPUS of Arabidopsis thaliana (Mouse-ear cress).